The primary structure comprises 135 residues: MKVLSIDFGTKRVGLAISDPDQIFAFPYKVMERTTRDAMFSELLEIIENEKVGDIVIGLPLSLDGEDTLTTRQVRNFAASLERRVDLPIHLVDERLSSIAAEDELKEAGLWDRKRKKNLDSQAAKIILETWLARA.

The protein belongs to the YqgF nuclease family.

Its subcellular location is the cytoplasm. Could be a nuclease involved in processing of the 5'-end of pre-16S rRNA. This is Putative pre-16S rRNA nuclease from Maridesulfovibrio salexigens (strain ATCC 14822 / DSM 2638 / NCIMB 8403 / VKM B-1763) (Desulfovibrio salexigens).